The chain runs to 160 residues: Small ribosomal subunit protein uS9 (160 aa).

Polar residues predominate over residues Met1 to Pro18. The interval Met1–Tyr37 is disordered.

It belongs to the universal ribosomal protein uS9 family.

The chain is Small ribosomal subunit protein uS9 from Hyphomonas neptunium (strain ATCC 15444).